Reading from the N-terminus, the 430-residue chain is UDP-N-acetylglucosamine 1-carboxyvinyltransferase (430 aa).

22–23 (KN) contacts phosphoenolpyruvate. A UDP-N-acetyl-alpha-D-glucosamine-binding site is contributed by arginine 102. Cysteine 126 functions as the Proton donor in the catalytic mechanism. Residue cysteine 126 is modified to 2-(S-cysteinyl)pyruvic acid O-phosphothioketal. UDP-N-acetyl-alpha-D-glucosamine-binding positions include 131–135 (RPVDL), 172–175 (KVSV), aspartate 317, and isoleucine 339.

This sequence belongs to the EPSP synthase family. MurA subfamily.

Its subcellular location is the cytoplasm. The catalysed reaction is phosphoenolpyruvate + UDP-N-acetyl-alpha-D-glucosamine = UDP-N-acetyl-3-O-(1-carboxyvinyl)-alpha-D-glucosamine + phosphate. The protein operates within cell wall biogenesis; peptidoglycan biosynthesis. Its function is as follows. Cell wall formation. Adds enolpyruvyl to UDP-N-acetylglucosamine. In Rhizobium johnstonii (strain DSM 114642 / LMG 32736 / 3841) (Rhizobium leguminosarum bv. viciae), this protein is UDP-N-acetylglucosamine 1-carboxyvinyltransferase.